The sequence spans 110 residues: Ig kappa chain V region 2717 (110 aa).

The framework-1 stretch occupies residues 1-23 (VEVLTQTPSPVSAAVGGTVTISC). Residues 24–36 (QSTKSIYBBBYLA) are complementarity-determining-1. A framework-2 region spans residues 37-51 (WYQZKPGQPPKALIY). The complementarity-determining-2 stretch occupies residues 52–58 (TASSLAS). A framework-3 region spans residues 59-90 (GVPSRFTGSGSGTZFTLTLSDVZCDDAATYYC). The segment at 91–99 (GGADYTGYS) is complementarity-determining-3. Positions 100-109 (FGGGTEVVVK) are framework-4.

The sequence is that of Ig kappa chain V region 2717 from Oryctolagus cuniculus (Rabbit).